A 507-amino-acid polypeptide reads, in one-letter code: Glycerol kinase (507 aa).

Threonine 12 lines the ADP pocket. The ATP site is built by threonine 12, threonine 13, and serine 14. Threonine 12 contributes to the sn-glycerol 3-phosphate binding site. Residue arginine 16 participates in ADP binding. Sn-glycerol 3-phosphate is bound by residues arginine 82, glutamate 83, tyrosine 134, and aspartate 250. Glycerol contacts are provided by arginine 82, glutamate 83, tyrosine 134, aspartate 250, and glutamine 251. The ADP site is built by threonine 272 and glycine 316. Residues threonine 272, glycine 316, glutamine 320, and glycine 417 each contribute to the ATP site. Positions 417 and 421 each coordinate ADP.

The protein belongs to the FGGY kinase family.

The enzyme catalyses glycerol + ATP = sn-glycerol 3-phosphate + ADP + H(+). It participates in polyol metabolism; glycerol degradation via glycerol kinase pathway; sn-glycerol 3-phosphate from glycerol: step 1/1. Its activity is regulated as follows. Inhibited by fructose 1,6-bisphosphate (FBP). In terms of biological role, key enzyme in the regulation of glycerol uptake and metabolism. Catalyzes the phosphorylation of glycerol to yield sn-glycerol 3-phosphate. The sequence is that of Glycerol kinase from Beijerinckia indica subsp. indica (strain ATCC 9039 / DSM 1715 / NCIMB 8712).